A 183-amino-acid polypeptide reads, in one-letter code: Outer membrane protein H.8 (183 aa).

Positions 1–17 (MKAYLALISAAVIGLAA) are cleaved as a signal peptide. C18 carries the N-palmitoyl cysteine lipid modification. Residue C18 is the site of S-diacylglycerol cysteine attachment. Residues 27 to 51 (AEATPAGEAPASEAPAAEAAPADAA) form a disordered region. In terms of domain architecture, Plastocyanin-like spans 57 to 183 (GNCAATVESN…LMNGKVTLVD (127 aa)). Cu cation-binding residues include H102, C166, H171, and M175.

Requires Cu cation as cofactor.

The protein resides in the cell outer membrane. The polypeptide is Outer membrane protein H.8 (Neisseria gonorrhoeae).